Reading from the N-terminus, the 162-residue chain is MAAAAASTKIVAVVVAVLLAILEMPSCAVARRHHHDHHDKPGHHDGGFPAVMTVNGFEKGEDGGGPAACDGHYHSDGELIVALSTEWFAGGRRCHRRIRITPSEHGRRGGGGGRRAVEATVVDECDSRRGCKDDVVDSSPAVWRALGLDTDSGEVRVTWSDV.

Positions 1–30 (MAAAAASTKIVAVVVAVLLAILEMPSCAVA) are cleaved as a signal peptide.

This sequence belongs to the kiwellin family.

Its subcellular location is the secreted. The protein is Putative ripening-related protein 7 of Oryza sativa subsp. japonica (Rice).